The sequence spans 417 residues: UDP-N-acetylglucosamine 1-carboxyvinyltransferase 2 (417 aa).

22–23 (KN) is a phosphoenolpyruvate binding site. Residue Arg-92 coordinates UDP-N-acetyl-alpha-D-glucosamine. Cys-116 (proton donor) is an active-site residue. Cys-116 is modified (2-(S-cysteinyl)pyruvic acid O-phosphothioketal). Residues 121–125 (RPIDL), Asp-305, and Ile-327 contribute to the UDP-N-acetyl-alpha-D-glucosamine site.

It belongs to the EPSP synthase family. MurA subfamily.

The protein resides in the cytoplasm. It carries out the reaction phosphoenolpyruvate + UDP-N-acetyl-alpha-D-glucosamine = UDP-N-acetyl-3-O-(1-carboxyvinyl)-alpha-D-glucosamine + phosphate. It functions in the pathway cell wall biogenesis; peptidoglycan biosynthesis. Functionally, cell wall formation. Adds enolpyruvyl to UDP-N-acetylglucosamine. This chain is UDP-N-acetylglucosamine 1-carboxyvinyltransferase 2, found in Caldanaerobacter subterraneus subsp. tengcongensis (strain DSM 15242 / JCM 11007 / NBRC 100824 / MB4) (Thermoanaerobacter tengcongensis).